The chain runs to 862 residues: Linoleate 9S-lipoxygenase 1 (862 aa).

The PLAT domain maps to 34-161 (NDFGATIIDG…NYRYSRVFFA (128 aa)). Positions 164 to 862 (TYLPSQMPAA…AKGIPNSISI (699 aa)) constitute a Lipoxygenase domain. The disordered stretch occupies residues 212–241 (GRPILGGNSDHPYPRRGRTERKPNASDPSL). Residues His517, His522, His708, Asn712, and Ile862 each contribute to the Fe cation site.

The protein belongs to the lipoxygenase family. Monomer. Requires Fe cation as cofactor.

The enzyme catalyses (9Z,12Z)-octadecadienoate + O2 = (9S)-hydroperoxy-(10E,12Z)-octadecadienoate. Its pathway is lipid metabolism; oxylipin biosynthesis. Functionally, plant lipoxygenase may be involved in a number of diverse aspects of plant physiology including growth and development, pest resistance, and senescence or responses to wounding. It catalyzes the hydroperoxidation of lipids containing a cis,cis-1,4-pentadiene structure. In Hordeum vulgare (Barley), this protein is Linoleate 9S-lipoxygenase 1 (LOX1.1).